The chain runs to 343 residues: GTPase Obg (343 aa).

One can recognise an Obg domain in the interval 1–159 (MKFLDQAKVY…LNIWLRLKLI (159 aa)). Positions 160–327 (ADAGLVGLPN…VLRALMTVIA (168 aa)) constitute an OBG-type G domain. GTP contacts are provided by residues 166 to 173 (GLPNAGKS), 191 to 195 (FTTLH), 212 to 215 (DIPG), 279 to 282 (SQVD), and 308 to 310 (SAV). Residues Ser-173 and Thr-193 each coordinate Mg(2+).

The protein belongs to the TRAFAC class OBG-HflX-like GTPase superfamily. OBG GTPase family. Monomer. Requires Mg(2+) as cofactor.

It localises to the cytoplasm. In terms of biological role, an essential GTPase which binds GTP, GDP and possibly (p)ppGpp with moderate affinity, with high nucleotide exchange rates and a fairly low GTP hydrolysis rate. Plays a role in control of the cell cycle, stress response, ribosome biogenesis and in those bacteria that undergo differentiation, in morphogenesis control. This Mesorhizobium japonicum (strain LMG 29417 / CECT 9101 / MAFF 303099) (Mesorhizobium loti (strain MAFF 303099)) protein is GTPase Obg.